Reading from the N-terminus, the 236-residue chain is Ascorbate-specific transmembrane electron transporter 1 (236 aa).

Residues 1 to 11 lie on the Cytoplasmic side of the membrane; it reads MGLGLGVRAAP. The chain crosses the membrane as a helical span at residues 12–32; sequence FTYAAHALAVAAAAMVLVWSI. Residues 15–219 form the Cytochrome b561 domain; sequence AAHALAVAAA…FGASVVVAAI (205 aa). The Extracellular segment spans residues 33–50; sequence QFRGGLAIESTNKNLIFN. The chain crosses the membrane as a helical span at residues 51 to 71; sequence VHPVLMLIGYVIIGGEAIMVY. A heme b-binding site is contributed by His-52. Residue 67 to 75 participates in L-ascorbate binding; that stretch reads AIMVYRVLP. Topologically, residues 72 to 84 are cytoplasmic; sequence RVLPTSNHDTTKL. A helical membrane pass occupies residues 85 to 105; sequence IHLILHGIALVLGAVGIYFAF. Residues His-86 and His-120 each coordinate heme b. At 106–122 the chain is on the extracellular side; that stretch reads KNHNESGIANLYSLHSW. 116–125 is a binding site for monodehydro-L-ascorbate radical; sequence LYSLHSWIGI. The helical transmembrane segment at 123–143 threads the bilayer; sequence IGIGTITLYGIQWIIGFVTFF. Residues 144 to 153 are Cytoplasmic-facing; sequence FPGAAPNVKK. A helical transmembrane segment spans residues 154–174; sequence GVLPWHVLFGLFVYILALANA. Position 159 (His-159) interacts with heme b. Over 175 to 201 the chain is Extracellular; sequence ELGFLEKLTFLESSGLDKYGTEAFLVN. The chain crosses the membrane as a helical span at residues 202–222; that stretch reads FTALVVVLFGASVVVAAIAPV. Topologically, residues 223 to 236 are cytoplasmic; it reads RLEEPQGYDPIPEN.

It depends on heme b as a cofactor.

It localises to the membrane. Its activity is regulated as follows. Inhibited by diethylpyrocarbonate. Its function is as follows. Two-heme-containing cytochrome. Catalyzes ascorbate-dependent trans-membrane electron transfer by utilizing a concerted H(+)/e(-) transfer mechanism. The chain is Ascorbate-specific transmembrane electron transporter 1 (ZCYB) from Zea mays (Maize).